Consider the following 429-residue polypeptide: Autophagy-related protein 18 (429 aa).

WD repeat units follow at residues 1 to 36 (MAMN…KSYE), 69 to 114 (KRQS…LLYT), 139 to 182 (PLPQ…AINV), 185 to 225 (AHRS…KLYQ), 230 to 269 (SMPS…SSPD), 309 to 355 (KHNG…AWFK), and 367 to 407 (VNNG…GGEG). Positions 226 to 230 (FRRGS) match the L/FRRG motif motif. Low complexity predominate over residues 262-275 (SHPTSSPDASPSSP). Positions 262–308 (SHPTSSPDASPSSPVGRDRSLSQSSSGYSPDRGDLTGDVGSSDFPAR) are disordered.

The protein belongs to the WD repeat PROPPIN family. As to quaternary structure, component of the PI(3,5)P2 regulatory complex.

It is found in the preautophagosomal structure membrane. Its subcellular location is the vacuole membrane. The protein resides in the endosome membrane. Its function is as follows. The PI(3,5)P2 regulatory complex regulates both the synthesis and turnover of phosphatidylinositol 3,5-bisphosphate (PtdIns(3,5)P2). Necessary for proper vacuole morphology. Plays an important role in osmotically-induced vacuole fragmentation. Required for cytoplasm to vacuole transport (Cvt) vesicle formation, pexophagy and starvation-induced autophagy. Involved in correct atg9 trafficking to the pre-autophagosomal structure. Might also be involved in premeiotic DNA replication. The protein is Autophagy-related protein 18 (atg18) of Neosartorya fischeri (strain ATCC 1020 / DSM 3700 / CBS 544.65 / FGSC A1164 / JCM 1740 / NRRL 181 / WB 181) (Aspergillus fischerianus).